A 90-amino-acid chain; its full sequence is Kunitz-type serine protease inhibitor C1 (90 aa).

The signal sequence occupies residues 1–24 (MSSGGLLLLLGLLTLWAELTPISG). A Pyrrolidone carboxylic acid modification is found at Gln25. Residues 31–81 (CNLAPESGRCRGHLRRIYYNPDSNKCEVFFYGGCGGNDNNFETRKKCRQTC) form the BPTI/Kunitz inhibitor domain. 3 disulfide bridges follow: Cys31/Cys81, Cys40/Cys64, and Cys56/Cys77. Positions 85–90 (RKGRPT) are excised as a propeptide.

This sequence belongs to the venom Kunitz-type family. Expressed by the venom gland.

The protein resides in the secreted. Serine protease inhibitor that inhibits trypsin. This Daboia siamensis (Eastern Russel's viper) protein is Kunitz-type serine protease inhibitor C1.